Consider the following 427-residue polypeptide: Ectoine TRAP transporter large permease protein TeaC (427 aa).

12 helical membrane-spanning segments follow: residues 13–35 (LLLG…FMMF), 49–69 (MAGI…AADI), 79–99 (LINM…VSTA), 103–123 (TLFG…GSPL), 147–167 (IAFL…SGTS), 172–192 (FIAG…YCVI), 216–236 (LALW…GGIF), 237–257 (SPTE…FVVF), 273–293 (GLIT…SWII), 320–340 (ICVA…ILVL), 356–376 (VLVG…PPFG), and 400–420 (FIFM…IALF).

It belongs to the TRAP transporter large permease family. As to quaternary structure, the complex comprises the extracytoplasmic solute receptor protein TeaA, and the two transmembrane proteins TeaB and TeaC.

The protein localises to the cell inner membrane. In terms of biological role, part of the tripartite ATP-independent periplasmic (TRAP) transport system TeaABC involved in the uptake of ectoine and hydroxyectoine in response to osmotic upshock. Probably functions as a recovery system for synthesized ectoine that leaks out of the cell. The polypeptide is Ectoine TRAP transporter large permease protein TeaC (teaC) (Halomonas elongata (strain ATCC 33173 / DSM 2581 / NBRC 15536 / NCIMB 2198 / 1H9)).